We begin with the raw amino-acid sequence, 334 residues long: Anthranilate phosphoribosyltransferase (334 aa).

Residues glycine 81, 84 to 85, threonine 89, 91 to 94, 109 to 117, and alanine 121 each bind 5-phospho-alpha-D-ribose 1-diphosphate; these read GD, NIST, and KHGSRSVSS. Glycine 81 contacts anthranilate. Position 93 (serine 93) interacts with Mg(2+). Arginine 167 contributes to the anthranilate binding site. Aspartate 225 and glutamate 226 together coordinate Mg(2+).

Belongs to the anthranilate phosphoribosyltransferase family. In terms of assembly, homodimer. The cofactor is Mg(2+).

It carries out the reaction N-(5-phospho-beta-D-ribosyl)anthranilate + diphosphate = 5-phospho-alpha-D-ribose 1-diphosphate + anthranilate. It functions in the pathway amino-acid biosynthesis; L-tryptophan biosynthesis; L-tryptophan from chorismate: step 2/5. In terms of biological role, catalyzes the transfer of the phosphoribosyl group of 5-phosphorylribose-1-pyrophosphate (PRPP) to anthranilate to yield N-(5'-phosphoribosyl)-anthranilate (PRA). In Actinobacillus pleuropneumoniae serotype 5b (strain L20), this protein is Anthranilate phosphoribosyltransferase.